A 150-amino-acid chain; its full sequence is Large ribosomal subunit protein bL17 (150 aa).

Residues 126 to 150 (DRAKRREERLKAQREGRDHEEETDE) form a disordered region.

It belongs to the bacterial ribosomal protein bL17 family. Part of the 50S ribosomal subunit. Contacts protein L32.

In Solibacter usitatus (strain Ellin6076), this protein is Large ribosomal subunit protein bL17.